A 476-amino-acid chain; its full sequence is Monofunctional riboflavin biosynthesis protein RIBA 2, chloroplastic (476 aa).

A chloroplast-targeting transit peptide spans M1 to F54. Residues M44–K306 are DHBP synthase. D-ribulose 5-phosphate is bound by residues R130–E131, D135, R245–T249, and E269. E131 provides a ligand contact to Mg(2+). Mg(2+) is bound at residue H248. An inactive GTP cyclohydrolase II region spans residues R307 to P476. GTP-binding positions include R357–E361, Q376, E399–K401, and T450.

This sequence in the N-terminal section; belongs to the DHBP synthase family. In the C-terminal section; belongs to the GTP cyclohydrolase II family. Mg(2+) serves as cofactor. It depends on Mn(2+) as a cofactor. Expressed in leaves, shoots, roots, flowers and siliques.

The protein resides in the plastid. The protein localises to the chloroplast. The enzyme catalyses D-ribulose 5-phosphate = (2S)-2-hydroxy-3-oxobutyl phosphate + formate + H(+). Its pathway is cofactor biosynthesis; riboflavin biosynthesis; 2-hydroxy-3-oxobutyl phosphate from D-ribulose 5-phosphate: step 1/1. In terms of biological role, involved in riboflavin biosynthesis. Catalyzes the conversion of D-ribulose 5-phosphate to formate and 3,4-dihydroxy-2-butanone 4-phosphate. RIBA2 and RIBA3 together are not able to complement the loss of function of RIBA1. This Arabidopsis thaliana (Mouse-ear cress) protein is Monofunctional riboflavin biosynthesis protein RIBA 2, chloroplastic (RIBA2).